We begin with the raw amino-acid sequence, 916 residues long: Rab3 GTPase-activating protein catalytic subunit (916 aa).

A disordered region spans residues 530-574; the sequence is NSKRKSEGMVGKASSEEEEDEDDDEGEFFDCDDLTAGAGSPTKAV. A phosphoserine mark is found at S543 and S544. Residues 545–562 are compositionally biased toward acidic residues; sequence EEEEDEDDDEGEFFDCDD.

The protein belongs to the Rab3-GAP catalytic subunit family. In terms of assembly, the Rab3 GTPase-activating complex is a heterodimer composed of Rab3GAP1 and Rab3-GAP.

It localises to the cytoplasm. In terms of biological role, catalytic subunit of the Rab3 GTPase-activating (Rab3GAP) complex composed of Rab3-GAP and Rab3GAP1, which has both GTPase-activating protein (GAP) activity towards Rab3, and guanine nucleotide exchange factor (GEF) activity towards Rab18. As part of the Rab3GAP complex, required for the rapid induction and sustained expression of synaptic homeostasis at the neuromuscular junction (NMJ). Also participates in the regulation of autophagy in tissues such as larval fat cells and adult muscles. The Rab3GAP complex, acts as a GAP for Rab3 by converting active Rab3-GTP to the inactive form Rab3-GDP. At the neuromuscular junction (NMJ), forms a presynaptic signaling mechanism with Rab3 that regulates progression of synaptic homeostasis at a late stage of vesicle release. Within this mechanism Rab3-GTP acts, directly or indirectly, to inhibit the progression of synaptic homeostasis, and Rab3-GAP functions to inactivate this action of Rab3-GTP. The Rab3GAP complex, acts as a GEF for Rab18 by promoting the conversion of inactive Rab18-GDP to the active form Rab18-GTP. Regulates autophagy as part of a Rab3GAP-Rab18 module. Once Rab18 is activated by the GEF Rab3GAP complex, the Rab3GAP-Rab18 module localizes to autophagosomes, and regulates autolysosome formation and maturation together with the Rab18 interacting effector, the PI3K/Vps34 Complex I. This is Rab3 GTPase-activating protein catalytic subunit from Drosophila melanogaster (Fruit fly).